The primary structure comprises 243 residues: MLTFLIPTAKEMMIPKESHPHLLPQDSQAILKIMAAMTTEDLAKSYRIKEEAAKKEQQRWQDMASQQNLAYPAYQLFNGLMYRHIKRDKLTTQEQAYLTQQVYITSSFYGIIPANHPIAEHRHDFHTRIKIEGQSLKSYWRPCYNQFAKEHPQVISLLSSEFDDVFSKDCKQLWISPKFMAEKEGQFKTHSTISKKARGAFLTACMENNCQTVDSLKSLVFAGFYYHPDLSTDHEFVYIKKEA.

It belongs to the UPF0246 family.

In Streptococcus pyogenes serotype M28 (strain MGAS6180), this protein is UPF0246 protein M28_Spy1772.